The following is a 363-amino-acid chain: Histidinol-phosphate aminotransferase (363 aa).

Position 218 is an N6-(pyridoxal phosphate)lysine (Lys-218).

The protein belongs to the class-II pyridoxal-phosphate-dependent aminotransferase family. Histidinol-phosphate aminotransferase subfamily. Homodimer. It depends on pyridoxal 5'-phosphate as a cofactor.

The catalysed reaction is L-histidinol phosphate + 2-oxoglutarate = 3-(imidazol-4-yl)-2-oxopropyl phosphate + L-glutamate. The protein operates within amino-acid biosynthesis; L-histidine biosynthesis; L-histidine from 5-phospho-alpha-D-ribose 1-diphosphate: step 7/9. The chain is Histidinol-phosphate aminotransferase from Xanthomonas oryzae pv. oryzae (strain MAFF 311018).